The chain runs to 501 residues: Probable cytochrome P450 6t3 (501 aa).

Cysteine 444 serves as a coordination point for heme.

It belongs to the cytochrome P450 family. It depends on heme as a cofactor.

Its subcellular location is the endoplasmic reticulum membrane. It localises to the microsome membrane. In terms of biological role, may be involved in the metabolism of insect hormones and in the breakdown of synthetic insecticides. This is Probable cytochrome P450 6t3 (Cyp6t3) from Drosophila melanogaster (Fruit fly).